We begin with the raw amino-acid sequence, 414 residues long: Gamma-glutamyl phosphate reductase (414 aa).

This sequence belongs to the gamma-glutamyl phosphate reductase family.

The protein resides in the cytoplasm. The catalysed reaction is L-glutamate 5-semialdehyde + phosphate + NADP(+) = L-glutamyl 5-phosphate + NADPH + H(+). It participates in amino-acid biosynthesis; L-proline biosynthesis; L-glutamate 5-semialdehyde from L-glutamate: step 2/2. Functionally, catalyzes the NADPH-dependent reduction of L-glutamate 5-phosphate into L-glutamate 5-semialdehyde and phosphate. The product spontaneously undergoes cyclization to form 1-pyrroline-5-carboxylate. This is Gamma-glutamyl phosphate reductase from Xanthomonas axonopodis pv. citri (strain 306).